A 582-amino-acid polypeptide reads, in one-letter code: Phosphoglucomutase, cytoplasmic (582 aa).

Alpha-D-glucose 1,6-bisphosphate is bound by residues Arg25 and Ser124. The active-site Phosphoserine intermediate is Ser124. Residues Ser124, Asp300, Asp302, and Asp304 each coordinate Mg(2+). At Ser124 the chain carries Phosphoserine. Alpha-D-glucose 1,6-bisphosphate-binding residues include Asp304, Arg305, Thr368, Glu387, Ser389, and Lys400.

The protein belongs to the phosphohexose mutase family. Monomer. Requires Mg(2+) as cofactor.

The protein resides in the cytoplasm. The enzyme catalyses alpha-D-glucose 1-phosphate = alpha-D-glucose 6-phosphate. It carries out the reaction O-phospho-L-seryl-[protein] + alpha-D-glucose 1-phosphate = alpha-D-glucose 1,6-bisphosphate + L-seryl-[protein]. The catalysed reaction is alpha-D-glucose 1,6-bisphosphate + L-seryl-[protein] = O-phospho-L-seryl-[protein] + alpha-D-glucose 6-phosphate. Its function is as follows. Catalyzes the reversible isomerization of alpha-D-glucose 1-phosphate to alpha-D-glucose 6-phosphate. The mechanism proceeds via the intermediate compound alpha-D-glucose 1,6-bisphosphate. This enzyme participates in both the breakdown and synthesis of glucose. This is Phosphoglucomutase, cytoplasmic (PGM1) from Pisum sativum (Garden pea).